The primary structure comprises 380 residues: Chaperone protein DnaJ (380 aa).

The 68-residue stretch at 5–72 (DYYDTLGVPK…QKRAAYDQYG (68 aa)) folds into the J domain. Residues 21–47 (IKKAYRKLAMKHHPDRNQGDTSKVSED) form a disordered region. Over residues 24 to 34 (AYRKLAMKHHP) the composition is skewed to basic residues. Residues 35–47 (DRNQGDTSKVSED) are compositionally biased toward basic and acidic residues. The CR-type zinc-finger motif lies at 139–217 (GKEAQIRIPS…CHGVGKTKNN (79 aa)). Residues C152, C155, C169, C172, C191, C194, C205, and C208 each coordinate Zn(2+). CXXCXGXG motif repeat units follow at residues 152 to 159 (CGICHGTG), 169 to 176 (CTTCHGHG), 191 to 198 (CPQCKGSG), and 205 to 212 (CVACHGVG).

This sequence belongs to the DnaJ family. In terms of assembly, homodimer. The cofactor is Zn(2+).

The protein localises to the cytoplasm. Participates actively in the response to hyperosmotic and heat shock by preventing the aggregation of stress-denatured proteins and by disaggregating proteins, also in an autonomous, DnaK-independent fashion. Unfolded proteins bind initially to DnaJ; upon interaction with the DnaJ-bound protein, DnaK hydrolyzes its bound ATP, resulting in the formation of a stable complex. GrpE releases ADP from DnaK; ATP binding to DnaK triggers the release of the substrate protein, thus completing the reaction cycle. Several rounds of ATP-dependent interactions between DnaJ, DnaK and GrpE are required for fully efficient folding. Also involved, together with DnaK and GrpE, in the DNA replication of plasmids through activation of initiation proteins. This is Chaperone protein DnaJ from Polaromonas naphthalenivorans (strain CJ2).